We begin with the raw amino-acid sequence, 274 residues long: Elongation factor Ts (274 aa).

Positions 82–85 are involved in Mg(2+) ion dislocation from EF-Tu; it reads TDFV.

This sequence belongs to the EF-Ts family.

It is found in the cytoplasm. Its function is as follows. Associates with the EF-Tu.GDP complex and induces the exchange of GDP to GTP. It remains bound to the aminoacyl-tRNA.EF-Tu.GTP complex up to the GTP hydrolysis stage on the ribosome. The protein is Elongation factor Ts of Flavobacterium psychrophilum (strain ATCC 49511 / DSM 21280 / CIP 103535 / JIP02/86).